A 308-amino-acid polypeptide reads, in one-letter code: Acetylglutamate kinase (308 aa).

Residues 73–74 (GG), R95, and N194 each bind substrate.

Belongs to the acetylglutamate kinase family. ArgB subfamily.

The protein resides in the cytoplasm. The enzyme catalyses N-acetyl-L-glutamate + ATP = N-acetyl-L-glutamyl 5-phosphate + ADP. The protein operates within amino-acid biosynthesis; L-arginine biosynthesis; N(2)-acetyl-L-ornithine from L-glutamate: step 2/4. Catalyzes the ATP-dependent phosphorylation of N-acetyl-L-glutamate. The sequence is that of Acetylglutamate kinase from Rhodococcus jostii (strain RHA1).